A 380-amino-acid chain; its full sequence is Chaperone protein DnaJ (380 aa).

The 66-residue stretch at 5–70 folds into the J domain; sequence DYYEVLGVER…SKRAAYDQYG (66 aa). The segment at 139 to 217 adopts a CR-type zinc-finger fold; it reads GTNVNIRVPT…CHGEGRVEES (79 aa). Zn(2+) contacts are provided by C152, C155, C169, C172, C191, C194, C205, and C208. CXXCXGXG motif repeat units lie at residues 152-159, 169-176, 191-198, and 205-212; these read CKPCDGSG, CPTCGGIG, CPRCHGHG, and CDSCHGEG. A disordered region spans residues 224-245; sequence VPPGVDTGDRIRLSGEGEAGTQ.

This sequence belongs to the DnaJ family. Homodimer. The cofactor is Zn(2+).

It is found in the cytoplasm. Participates actively in the response to hyperosmotic and heat shock by preventing the aggregation of stress-denatured proteins and by disaggregating proteins, also in an autonomous, DnaK-independent fashion. Unfolded proteins bind initially to DnaJ; upon interaction with the DnaJ-bound protein, DnaK hydrolyzes its bound ATP, resulting in the formation of a stable complex. GrpE releases ADP from DnaK; ATP binding to DnaK triggers the release of the substrate protein, thus completing the reaction cycle. Several rounds of ATP-dependent interactions between DnaJ, DnaK and GrpE are required for fully efficient folding. Also involved, together with DnaK and GrpE, in the DNA replication of plasmids through activation of initiation proteins. In Pseudomonas syringae pv. syringae (strain B728a), this protein is Chaperone protein DnaJ.